A 393-amino-acid chain; its full sequence is Meiotic driver wtf19 (393 aa).

The interval 1-98 is disordered; it reads MKNKYYPLRS…SSGTADNSST (98 aa). Positions 11–29 are enriched in basic and acidic residues; the sequence is SMDELSAKNDNEIDLEKGP. Composition is skewed to polar residues over residues 57 to 72 and 89 to 98; these read GANN…STTP and SSGTADNSST. Helical transmembrane passes span 104–124, 137–157, 167–187, 208–228, 233–253, 269–289, 296–316, and 332–352; these read AFLS…YLTY, WVYF…LWYF, VTVI…AQCV, CVKV…IGLF, EMMI…FGCV, CTIS…FWTF, LAKV…TMFL, and VLFI…GALI.

The protein belongs to the WTF family. Homomer. Forms protein aggregates. The two isoforms can interact with each other and with themselves. High sequence similarity is required for their interaction.

Its subcellular location is the spore membrane. It localises to the vacuole membrane. The protein resides in the ascus epiplasm. The protein localises to the cytoplasm. It is found in the endoplasmic reticulum membrane. In terms of biological role, promotes unequal transmission of alleles from the parental zygote to progeny spores by acting as poison/antidote system where the poison and antidote proteins are produced from the same locus; the poison component is trans-acting and targets all spores within an ascus whereas the antidote component is spore-specific, leading to poisoning of all progeny that do not inherit the allele. Localizes isoform 2 to the vacuole thereby facilitating its degradation. Functionally, forms toxic aggregates that disrupt spore maturation. The polypeptide is Meiotic driver wtf19 (Schizosaccharomyces pombe (strain 972 / ATCC 24843) (Fission yeast)).